Consider the following 477-residue polypeptide: Methylenetetrahydrofolate--tRNA-(uracil-5-)-methyltransferase TrmFO (477 aa).

FAD is bound at residue 15 to 20; the sequence is GAGLAG.

It belongs to the MnmG family. TrmFO subfamily. FAD serves as cofactor.

The protein localises to the cytoplasm. The catalysed reaction is uridine(54) in tRNA + (6R)-5,10-methylene-5,6,7,8-tetrahydrofolate + NADH + H(+) = 5-methyluridine(54) in tRNA + (6S)-5,6,7,8-tetrahydrofolate + NAD(+). The enzyme catalyses uridine(54) in tRNA + (6R)-5,10-methylene-5,6,7,8-tetrahydrofolate + NADPH + H(+) = 5-methyluridine(54) in tRNA + (6S)-5,6,7,8-tetrahydrofolate + NADP(+). Catalyzes the folate-dependent formation of 5-methyl-uridine at position 54 (M-5-U54) in all tRNAs. The polypeptide is Methylenetetrahydrofolate--tRNA-(uracil-5-)-methyltransferase TrmFO (Nitrobacter winogradskyi (strain ATCC 25391 / DSM 10237 / CIP 104748 / NCIMB 11846 / Nb-255)).